The primary structure comprises 85 residues: Toxin 3FTx-Lei1 (85 aa).

An N-terminal signal peptide occupies residues 1-21 (MKTLLLSLVVVTFVCLDLAHT). Cystine bridges form between cysteine 24–cysteine 45, cysteine 27–cysteine 32, cysteine 38–cysteine 63, cysteine 67–cysteine 78, and cysteine 79–cysteine 84.

This sequence belongs to the three-finger toxin family. Ancestral subfamily. In terms of tissue distribution, expressed by the venom gland.

It localises to the secreted. This is Toxin 3FTx-Lei1 from Leioheterodon madagascariensis (Malagasy giant hognose snake).